A 218-amino-acid chain; its full sequence is MSPSAGFQFSLYFLQTKKVLWKLTGLCYILLFTLCFFADQENGGKALASPPGIWKRADVTFDSNTAFSSLVVSANKKTVKNVGVPQVVPDNPERFNSSPCVLGSPGFRSGKHYFEVKYGTQREWAVGLAGKSVKRKGNLNLVPEERIWQTGLWWLRHLETDPGRVHSTSGKITVFVDYSGGNVIFDLNRIITILKANFSGEEVVPFFYLGGTVSLTTL.

The first 40 residues, 1–40 (MSPSAGFQFSLYFLQTKKVLWKLTGLCYILLFTLCFFADQ), serve as a signal peptide directing secretion. Positions 41 to 48 (ENGGKALA) are excised as a propeptide. The 107-residue stretch at 49–155 (SPPGIWKRAD…RIWQTGLWWL (107 aa)) folds into the B30.2/SPRY domain. Residues 156 to 218 (RHLETDPGRV…LGGTVSLTTL (63 aa)) constitute a propeptide that is removed on maturation.

This sequence belongs to the ohanin/vespryn family. As to expression, expressed by the venom gland.

The protein localises to the secreted. In terms of biological role, neurotoxin that produces dose-dependent hypolocomotion and hyperalgesia in mice. May directly act on the central nervous system, as it is 6500-fold more potent when administered intracerebroventricularly than intraperitoneal. The chain is Ohanin-like protein from Lachesis muta muta (Bushmaster).